Here is a 206-residue protein sequence, read N- to C-terminus: Large ribosomal subunit protein uL4 (206 aa).

The segment at 47 to 75 (GTQSAKTRAEVSGGGIKPWRQKGTGRARQ) is disordered.

It belongs to the universal ribosomal protein uL4 family. In terms of assembly, part of the 50S ribosomal subunit.

One of the primary rRNA binding proteins, this protein initially binds near the 5'-end of the 23S rRNA. It is important during the early stages of 50S assembly. It makes multiple contacts with different domains of the 23S rRNA in the assembled 50S subunit and ribosome. Functionally, forms part of the polypeptide exit tunnel. The sequence is that of Large ribosomal subunit protein uL4 from Clostridium botulinum (strain 657 / Type Ba4).